The following is a 1070-amino-acid chain: DNA-directed RNA polymerase subunit beta (1070 aa).

This sequence belongs to the RNA polymerase beta chain family. In plastids the minimal PEP RNA polymerase catalytic core is composed of four subunits: alpha, beta, beta', and beta''. When a (nuclear-encoded) sigma factor is associated with the core the holoenzyme is formed, which can initiate transcription.

Its subcellular location is the plastid. The protein resides in the chloroplast. It carries out the reaction RNA(n) + a ribonucleoside 5'-triphosphate = RNA(n+1) + diphosphate. Functionally, DNA-dependent RNA polymerase catalyzes the transcription of DNA into RNA using the four ribonucleoside triphosphates as substrates. This is DNA-directed RNA polymerase subunit beta from Buxus microphylla (Littleleaf boxwood).